Consider the following 224-residue polypeptide: Na(+)-translocating NADH-quinone reductase subunit D (224 aa).

Helical transmembrane passes span 43-63 (TVMA…ISMI), 67-87 (IPSS…VIVV), 104-124 (VFVG…AFAM), 132-152 (FFDG…LGFV), and 179-199 (NGLL…IWAL).

It belongs to the NqrDE/RnfAE family. In terms of assembly, composed of six subunits; NqrA, NqrB, NqrC, NqrD, NqrE and NqrF.

It is found in the cell inner membrane. It catalyses the reaction a ubiquinone + n Na(+)(in) + NADH + H(+) = a ubiquinol + n Na(+)(out) + NAD(+). In terms of biological role, NQR complex catalyzes the reduction of ubiquinone-1 to ubiquinol by two successive reactions, coupled with the transport of Na(+) ions from the cytoplasm to the periplasm. NqrA to NqrE are probably involved in the second step, the conversion of ubisemiquinone to ubiquinol. This chain is Na(+)-translocating NADH-quinone reductase subunit D, found in Pseudomonas aeruginosa (strain LESB58).